Reading from the N-terminus, the 1077-residue chain is Carbamoyl phosphate synthase large chain (1077 aa).

The tract at residues 2 to 403 is carboxyphosphate synthetic domain; the sequence is PKRTDIKSIL…SLQKALRGLE (402 aa). Arg129, Arg169, Gly175, Gly176, Glu208, Leu210, Glu215, Gly241, Ile242, His243, Gln285, and Glu299 together coordinate ATP. The region spanning 133-328 is the ATP-grasp 1 domain; that stretch reads DIAMKKIGLD…IAKIAAKLAV (196 aa). Mg(2+) is bound by residues Gln285, Glu299, and Asn301. Mn(2+) is bound by residues Gln285, Glu299, and Asn301. The segment at 404 to 553 is oligomerization domain; it reads VGATGFDPKV…YSTYEEECES (150 aa). A carbamoyl phosphate synthetic domain region spans residues 554–936; that stretch reads NPTSDRPKVM…AFSKAMLGSQ (383 aa). The region spanning 679–870 is the ATP-grasp 2 domain; the sequence is QQAVNRLGLK…LAKIAARVMV (192 aa). Positions 715, 754, 756, 761, 786, 787, 788, 789, 829, and 841 each coordinate ATP. Residues Gln829, Glu841, and Asn843 each contribute to the Mg(2+) site. Gln829, Glu841, and Asn843 together coordinate Mn(2+). Residues 937–1077 form the MGS-like domain; it reads SGMKKSGRAL…MHAKIKNMKA (141 aa). An allosteric domain region spans residues 937–1077; it reads SGMKKSGRAL…MHAKIKNMKA (141 aa).

This sequence belongs to the CarB family. In terms of assembly, composed of two chains; the small (or glutamine) chain promotes the hydrolysis of glutamine to ammonia, which is used by the large (or ammonia) chain to synthesize carbamoyl phosphate. Tetramer of heterodimers (alpha,beta)4. The cofactor is Mg(2+). Mn(2+) is required as a cofactor.

It carries out the reaction hydrogencarbonate + L-glutamine + 2 ATP + H2O = carbamoyl phosphate + L-glutamate + 2 ADP + phosphate + 2 H(+). The enzyme catalyses hydrogencarbonate + NH4(+) + 2 ATP = carbamoyl phosphate + 2 ADP + phosphate + 2 H(+). It functions in the pathway amino-acid biosynthesis; L-arginine biosynthesis; carbamoyl phosphate from bicarbonate: step 1/1. The protein operates within pyrimidine metabolism; UMP biosynthesis via de novo pathway; (S)-dihydroorotate from bicarbonate: step 1/3. Large subunit of the glutamine-dependent carbamoyl phosphate synthetase (CPSase). CPSase catalyzes the formation of carbamoyl phosphate from the ammonia moiety of glutamine, carbonate, and phosphate donated by ATP, constituting the first step of 2 biosynthetic pathways, one leading to arginine and/or urea and the other to pyrimidine nucleotides. The large subunit (synthetase) binds the substrates ammonia (free or transferred from glutamine from the small subunit), hydrogencarbonate and ATP and carries out an ATP-coupled ligase reaction, activating hydrogencarbonate by forming carboxy phosphate which reacts with ammonia to form carbamoyl phosphate. The chain is Carbamoyl phosphate synthase large chain from Yersinia pestis.